The chain runs to 1099 residues: MSSQTKFKKDKEIIAEYEAQIKEIRTQLVEQFKCLEQQSESRLQLLQDLQEFFRRKAEIELEYSRSLEKLAERFSSKIRSSREHQFKKDQYLLSPVNCWYLVLHQTRRESRDHATLNDIFMNNVIVRLSQISEDVIRLFKKSKEIGLQMHEELLKVTNELYTVMKTYHMYHAESISAESKLKEAEKQEEKQFNKSGDLSMNLLRHEDRPQRRSSVKKIEKMKEKRQAKYSENKLKCTKARNDYLLNLAATNAAISKYYIHDVSDLIDCCDLGFHASLARTFRTYLSAEYNLETSRHEGLDVIENAVDNLDSRSDKHTVMDMCNQVFCPPLKFEFQPHMGDEVCQVSAQQPVQTELLMRYHQLQSRLATLKIENEEVRKTLDATMQTLQDMLTVEDFDVSDAFQHSRSTESVKSAASETYMSKINIAKRRANQQETEMFYFTKFKEYVNGSNLITKLQAKHDLLKQTLGEGERAECGTTRPPCLPPKPQKMRRPRPLSVYSHKLFNGSMEAFIKDSGQAIPLVVESCIRYINLYGLQQQGIFRVPGSQVEVNDIKNSFERGEDPLVDDQNERDINSVAGVLKLYFRGLENPLFPKERFQDLISTIKLENPAERVHQIQQILVTLPRVVIVVMRYLFAFLNHLSQYSDENMMDPYNLAICFGPTLMHIPDGQDPVSCQAHINEVIKTIIIHHEAIFPSPRELEGPVYEKCMAGGEEYCDSPHSEPGAIDEVDHDNGTEPHTSDEEVEQIEAIAKFDYMGRSPRELSFKKGASLLLYHRASEDWWEGRHNGVDGLIPHQYIVVQDMDDAFSDSLSQKADSEASSGPLLDDKASSKNDLQSPTEHISDYGFGGVMGRVRLRSDGAAIPRRRSGGDTHSPPRGLGPSIDTPPRAAACPSSPHKIPLTRGRIESPEKRRMATFGSAGSINYPDKKALSEGHSMRSTCGSTRHSSLGDHKSLEAEALAEDIEKTMSTALHELRELERQNTVKQAPDVVLDTLEPLKNPPGPVSSEPASPLHTIVIRDPDAAMRRSSSSSTEMMTTFKPALSARLAGAQLRPPPMRPVRPVVQHRSSSSSSSGVGSPAVTPTEKMFPNSSADKSGTM.

The F-BAR domain maps to 19–314 (AQIKEIRTQL…AVDNLDSRSD (296 aa)). The segment at 205–225 (HEDRPQRRSSVKKIEKMKEKR) is disordered. Residues 352–392 (QTELLMRYHQLQSRLATLKIENEEVRKTLDATMQTLQDMLT) are a coiled coil. The disordered stretch occupies residues 471–493 (ERAECGTTRPPCLPPKPQKMRRP). In terms of domain architecture, Rho-GAP spans 506–694 (GSMEAFIKDS…TIIIHHEAIF (189 aa)). The region spanning 744–803 (VEQIEAIAKFDYMGRSPRELSFKKGASLLLYHRASEDWWEGRHNGVDGLIPHQYIVVQDM) is the SH3 domain. Over residues 809 to 820 (DSLSQKADSEAS) the composition is skewed to polar residues. Residues 809-847 (DSLSQKADSEASSGPLLDDKASSKNDLQSPTEHISDYGF) are disordered. 5 positions are modified to phosphoserine: Ser-817, Ser-820, Ser-821, Ser-837, and Ser-858. 2 disordered regions span residues 861-911 (AAIP…SPEK) and 926-950 (PDKKALSEGHSMRSTCGSTRHSSLG). Residues 926 to 936 (PDKKALSEGHS) show a composition bias toward basic and acidic residues. A compositionally biased stretch (polar residues) spans 937–947 (MRSTCGSTRHS). Residues 952–987 (HKSLEAEALAEDIEKTMSTALHELRELERQNTVKQA) adopt a coiled-coil conformation. At Ser-954 the chain carries Phosphoserine. The disordered stretch occupies residues 995 to 1099 (LEPLKNPPGP…NSSADKSGTM (105 aa)). 2 stretches are compositionally biased toward low complexity: residues 1026 to 1038 (RRSSSSSTEMMTT) and 1060 to 1074 (VRPVVQHRSSSSSSS). Polar residues predominate over residues 1089–1099 (PNSSADKSGTM).

Homodimer. Forms a heterooligomer with SRGAP1 and SRGAP2 through its F-BAR domain. Interacts with WASF1. Probably interacts with ROBO1. Interacts with FASLG. Highly expressed in adult and fetal brain. Expressed at low levels in kidney. Isoform 3 is expressed in the kidney but is absent in the brain.

Its function is as follows. GTPase-activating protein for RAC1 and perhaps Cdc42, but not for RhoA small GTPase. May attenuate RAC1 signaling in neurons. The sequence is that of SLIT-ROBO Rho GTPase-activating protein 3 (SRGAP3) from Homo sapiens (Human).